A 450-amino-acid chain; its full sequence is Magnesium transporter MgtE (450 aa).

Topologically, residues 1–283 are cytoplasmic; it reads MEEKLAVSLQ…SEAGPVALWL (283 aa). Residues E59, D91, D95, and G136 each coordinate Mg(2+). 2 CBS domains span residues 138–200 and 202–258; these read MTPE…RVAE and MNPK…EATE. Residues Y170, S185, R187, D188, and V207 each contribute to the ATP site. Residues E216, A223, D226, D247, D250, E255, E258, and D259 each contribute to the Mg(2+) site. E275 provides a ligand contact to Ca(2+). E275, Q304, E307, and E311 together coordinate Mn(2+). A helical membrane pass occupies residues 284–306; sequence ARVRWLVILILTGMVTSSILQGF. Over 307 to 315 the chain is Periplasmic; it reads ESVLEAVTA. E311 is a binding site for Ca(2+). Residues 316 to 337 form a helical membrane-spanning segment; it reads LAFYVPVLLGTGGNTGNQSATL. Residues 338 to 351 lie on the Cytoplasmic side of the membrane; the sequence is IIRALATRDLDLRD. A helical transmembrane segment spans residues 352–381; it reads WRRVFLKEMGVGLLLGLTLSFLLVGKVYWD. Over 382–385 the chain is Periplasmic; sequence GHPL. Residue H383 participates in Mn(2+) binding. Residues 386–409 form a helical membrane-spanning segment; sequence LLPVVGVSLVLIVFFANLVGAMLP. Residues 410-420 are Cytoplasmic-facing; the sequence is FLLRRLGVDPA. Mg(2+) is bound by residues D418, A428, and D432. A helical membrane pass occupies residues 421-443; that stretch reads LVSNPLVATLSDVTGLLIYLSVA. Residues 444-450 are Periplasmic-facing; the sequence is RLLLEAV.

It belongs to the SLC41A transporter family. In terms of assembly, homodimer.

The protein resides in the cell inner membrane. It carries out the reaction Mg(2+)(in) = Mg(2+)(out). With respect to regulation, the channel activity is regulated via the N-terminal cytoplasmic region, which acts as a Mg(2+) sensor to regulate the gating of the ion-conducting pore in response to the intracellular magnesium concentration. Under high-intracellular magnesium conditions, binding of magnesium to the N-terminal cytoplasmic domain stabilizes the closed conformation of the channel. Under low-intracellular magnesium conditions, the channel is in equilibrium between the open and closed states. A cation-binding site within the membrane (M1) strictly recognizes the size and geometry of the Mg(2+) hydration shells, which may be important for the selective transport of Mg(2+) over other cations. Cation-binding sites on the periplasmic side (M2 and M3) regulate channel opening and prevent conduction of near-cognate cations. Binding of Mn(2+) to the periplasmic sites strongly inhibits the Mg(2+) transport activity. In addition, activity is regulated by ATP, which binds to MgtE and modulates its Mg(2+)-dependent channel gating. ATP binding enhances the intracellular domain affinity for Mg(2+) within physiological concentrations of this divalent cation, enabling MgtE to function as an in vivo Mg(2+) sensor. ATP dissociation from MgtE upregulates Mg(2+) influx at both high and low intracellular Mg(2+) concentrations. In terms of biological role, highly selective magnesium channel that plays an important role in Mg(2+) homeostasis. Functions as a Mg(2+)-dependent gating channel. Exhibits low activity with cobalt, suggesting that it might also be involved in the uptake of Co(2+) as a micronutrient. Also exhibits low activity with Ca(2+), but it shows almost no activity with Mn(2+). This is Magnesium transporter MgtE from Thermus thermophilus (strain ATCC 27634 / DSM 579 / HB8).